Reading from the N-terminus, the 267-residue chain is Thiamine pyrophosphokinase 2 (267 aa).

The protein belongs to the thiamine pyrophosphokinase family. Expressed in leaves and at lower levels in flowers.

It is found in the cytoplasm. The protein resides in the cytosol. The catalysed reaction is thiamine + ATP = thiamine diphosphate + AMP + H(+). It participates in cofactor biosynthesis; thiamine diphosphate biosynthesis; thiamine diphosphate from thiamine: step 1/1. Functionally, catalyzes the phosphorylation of thiamine to thiamine pyrophosphate (TPP). TPP is an active cofactor for enzymes involved in glycolysis and energy production. Plant leaves require high levels of TPP for photosynthesis and carbohydrate metabolism. This is Thiamine pyrophosphokinase 2 from Arabidopsis thaliana (Mouse-ear cress).